The chain runs to 367 residues: Splicing factor U2AF-associated protein 2 (367 aa).

Residues 36–104 (YDPNSLKMNK…SKSENSEASP (69 aa)) are disordered. Basic and acidic residues predominate over residues 61 to 78 (TEGKESSNGEDRHTKRLY). 2 consecutive RRM domains span residues 112–193 (VYIQ…KMRV) and 268–329 (LLID…VVEA).

This sequence belongs to the HTATSF1 family. Interacts with the U2AF large and U2AF small subunits.

Has a role in pre-mRNA splicing. The polypeptide is Splicing factor U2AF-associated protein 2 (uap2) (Schizosaccharomyces pombe (strain 972 / ATCC 24843) (Fission yeast)).